A 73-amino-acid chain; its full sequence is Small proline-rich protein 2G (73 aa).

The segment covering 1 to 11 (MSYQQQQCKQP) has biased composition (low complexity). Residues 1 to 20 (MSYQQQQCKQPCQPPPVCPT) are disordered. Tandem repeats lie at residues 21–29 (PKCPEPCPP), 30–38 (PKCPEPYLP), and 39–47 (PPCPPEHCP). The 3 X 9 AA approximate tandem repeats stretch occupies residues 21–47 (PKCPEPCPPPKCPEPYLPPPCPPEHCP).

This sequence belongs to the cornifin (SPRR) family.

The protein localises to the cytoplasm. Functionally, cross-linked envelope protein of keratinocytes. It is a keratinocyte protein that first appears in the cell cytosol, but ultimately becomes cross-linked to membrane proteins by transglutaminase. All that results in the formation of an insoluble envelope beneath the plasma membrane. In Homo sapiens (Human), this protein is Small proline-rich protein 2G (SPRR2G).